The chain runs to 479 residues: Baeyer-Villiger monooxygenase AacuH (479 aa).

Residues 14–34 (DSLGHPDGASRPPVSAESLSR) form a disordered region.

This sequence belongs to the AflY oxidoreductase family.

It functions in the pathway secondary metabolite biosynthesis. Its function is as follows. Baeyer-Villiger monooxygenase; part of the gene cluster that mediates the biosynthesis of the tetrahydroxanthone dimer secalonic acid D. The pathway begins with the synthesis of atrochrysone thioester by the polyketide synthase AacuL. The atrochrysone carboxyl ACP thioesterase AacuM then breaks the thioester bond and releases the atrochrysone carboxylic acid from AacuL. Atrochrysone carboxylic acid is decarboxylated by the decarboxylase AacuI, and oxidized by the anthrone oxygenase AacuG to yield emodin. Emodin is then reduced to emodin hydroquinone by a yet unidentified oxidoreductase. A-ring reduction by the short chain dehydrogenase AacuN, dehydration by the scytalone dehydratase-like protein AacuK and probable spontaneous re-oxidation, results in overall deoxygenation to chrysophanol. Baeyer-Villiger oxidation by the Baeyer-Villiger monooxygenase (BVMO) AacuH then yields monodictyphenone. Monodictyphenone is transformed into compounds with the tetrahydroxanthone skeleton via methylesterification by the methyltransferase AacuQ, followed by the action of the flavin-dependent monooxygenase AacuC, the isomerase AacuP, and the short chain dehydrogenase/reductase AacuF or AacuD. AacuF and AacuD should accept the same compound as a substrate but perform the ketoreduction with a different stereoselectivity, thus yielding blennolides B and A, respectively. In the final step of the biosynthesis, the cytochrome P450 monooxygenase AacuE accepts blennolide B and/or blennolide A to conduct the dimerization reaction to furnish the tetrahydroxanthone dimers, secalonic acids D, B, and F. The polypeptide is Baeyer-Villiger monooxygenase AacuH (Aspergillus aculeatus (strain ATCC 16872 / CBS 172.66 / WB 5094)).